Here is a 142-residue protein sequence, read N- to C-terminus: Large ribosomal subunit protein uL13 (142 aa).

It belongs to the universal ribosomal protein uL13 family. Part of the 50S ribosomal subunit.

In terms of biological role, this protein is one of the early assembly proteins of the 50S ribosomal subunit, although it is not seen to bind rRNA by itself. It is important during the early stages of 50S assembly. This Coxiella burnetii (strain CbuG_Q212) (Coxiella burnetii (strain Q212)) protein is Large ribosomal subunit protein uL13.